A 491-amino-acid chain; its full sequence is Polybrominated aromatic compounds synthase (491 aa).

Heme is bound at residue cysteine 437.

This sequence belongs to the cytochrome P450 family. The cofactor is heme.

Its function is as follows. Cytochrome P450 protein involved in the biosynthesis of polybrominated aromatic organic compounds. In the presence of ferredoxin, ferredoxin reductase and NADH, catalyzes the coupling of bromophenols and bromopyrroles, forming various polybrominated biphenyls and hydroxylated polybrominated diphenyl ethers (OH-BDE). Can also mediate the heterocoupling of 3,5-dibromocatechol. Can also use chlorinated phenolic substrates. 2,3,4-tribromopyrrole could be the physiological substrate. In Pseudoalteromonas luteoviolacea (strain 2ta16), this protein is Polybrominated aromatic compounds synthase.